Here is a 136-residue protein sequence, read N- to C-terminus: Ribosome-binding factor A (136 aa).

The interval 1–22 (MNTAGPAGKLAGHAASGPTQRQ) is disordered.

Belongs to the RbfA family. In terms of assembly, monomer. Binds 30S ribosomal subunits, but not 50S ribosomal subunits or 70S ribosomes.

Its subcellular location is the cytoplasm. In terms of biological role, one of several proteins that assist in the late maturation steps of the functional core of the 30S ribosomal subunit. Associates with free 30S ribosomal subunits (but not with 30S subunits that are part of 70S ribosomes or polysomes). Required for efficient processing of 16S rRNA. May interact with the 5'-terminal helix region of 16S rRNA. This is Ribosome-binding factor A from Gluconacetobacter diazotrophicus (strain ATCC 49037 / DSM 5601 / CCUG 37298 / CIP 103539 / LMG 7603 / PAl5).